A 552-amino-acid polypeptide reads, in one-letter code: Membrane protein insertase YidC (552 aa).

A helical membrane pass occupies residues 6–26; sequence NLLLAAIAAVILMLFIRWNHF. 2 stretches are compositionally biased toward polar residues: residues 32–41 and 60–70; these read QHQAGNTPAG and PTASDTPQATA. The tract at residues 32 to 70 is disordered; sequence QHQAGNTPAGSSIAAIAPDSNGDIPSAVPTASDTPQATA. The next 4 membrane-spanning stretches (helical) occupy residues 365–387, 431–451, 472–492, and 508–528; these read WGLA…SAAS, FGGC…YWVL, MDPY…MQKL, and LPFV…LYWV.

This sequence belongs to the OXA1/ALB3/YidC family. Type 1 subfamily. Interacts with the Sec translocase complex via SecD. Specifically interacts with transmembrane segments of nascent integral membrane proteins during membrane integration.

The protein localises to the cell inner membrane. In terms of biological role, required for the insertion and/or proper folding and/or complex formation of integral membrane proteins into the membrane. Involved in integration of membrane proteins that insert both dependently and independently of the Sec translocase complex, as well as at least some lipoproteins. Aids folding of multispanning membrane proteins. This Cellvibrio japonicus (strain Ueda107) (Pseudomonas fluorescens subsp. cellulosa) protein is Membrane protein insertase YidC.